The following is a 91-amino-acid chain: UPF0250 protein BP0104 (91 aa).

The protein belongs to the UPF0250 family.

This Bordetella pertussis (strain Tohama I / ATCC BAA-589 / NCTC 13251) protein is UPF0250 protein BP0104.